The primary structure comprises 185 residues: Peptidyl-tRNA hydrolase (185 aa).

Residue Y14 coordinates tRNA. Residue H19 is the Proton acceptor of the active site. Y65, N67, and N113 together coordinate tRNA.

It belongs to the PTH family. Monomer.

Its subcellular location is the cytoplasm. The catalysed reaction is an N-acyl-L-alpha-aminoacyl-tRNA + H2O = an N-acyl-L-amino acid + a tRNA + H(+). Hydrolyzes ribosome-free peptidyl-tRNAs (with 1 or more amino acids incorporated), which drop off the ribosome during protein synthesis, or as a result of ribosome stalling. Functionally, catalyzes the release of premature peptidyl moieties from peptidyl-tRNA molecules trapped in stalled 50S ribosomal subunits, and thus maintains levels of free tRNAs and 50S ribosomes. This Rickettsia typhi (strain ATCC VR-144 / Wilmington) protein is Peptidyl-tRNA hydrolase.